The primary structure comprises 99 residues: NAD(P)H-quinone oxidoreductase subunit 4L, chloroplastic (99 aa).

3 consecutive transmembrane segments (helical) span residues 1–21 (MFEQ…FGLI), 31–51 (MSLE…SNLF), and 59–79 (IFTL…LAIA).

Belongs to the complex I subunit 4L family. NDH is composed of at least 16 different subunits, 5 of which are encoded in the nucleus.

It is found in the plastid. The protein localises to the chloroplast thylakoid membrane. It catalyses the reaction a plastoquinone + NADH + (n+1) H(+)(in) = a plastoquinol + NAD(+) + n H(+)(out). The enzyme catalyses a plastoquinone + NADPH + (n+1) H(+)(in) = a plastoquinol + NADP(+) + n H(+)(out). Its function is as follows. NDH shuttles electrons from NAD(P)H:plastoquinone, via FMN and iron-sulfur (Fe-S) centers, to quinones in the photosynthetic chain and possibly in a chloroplast respiratory chain. The immediate electron acceptor for the enzyme in this species is believed to be plastoquinone. Couples the redox reaction to proton translocation, and thus conserves the redox energy in a proton gradient. The polypeptide is NAD(P)H-quinone oxidoreductase subunit 4L, chloroplastic (Adiantum capillus-veneris (Maidenhair fern)).